A 287-amino-acid polypeptide reads, in one-letter code: Putative daunorubicin C-13 ketoreductase DnrU (287 aa).

24–30 lines the NADP(+) pocket; the sequence is GATSGIG. Position 149 (S149) interacts with substrate. Y175 serves as the catalytic Proton acceptor.

The protein belongs to the short-chain dehydrogenases/reductases (SDR) family.

Functionally, could reduce the 13-carbonyl of daunorubicin to produce (13S)-13-dihydrodaunorubicin. Could also be able to reduce the 13-carbonyl of doxorubicin. This Streptomyces sp. (strain C5) protein is Putative daunorubicin C-13 ketoreductase DnrU.